The sequence spans 615 residues: 1-deoxy-D-xylulose-5-phosphate synthase (615 aa).

Residues H76 and 117–119 contribute to the thiamine diphosphate site; that span reads GHS. Position 148 (D148) interacts with Mg(2+). Residues 149–150, N177, Y284, and E365 each bind thiamine diphosphate; that span reads GA. N177 is a binding site for Mg(2+).

It belongs to the transketolase family. DXPS subfamily. Homodimer. Requires Mg(2+) as cofactor. It depends on thiamine diphosphate as a cofactor.

The catalysed reaction is D-glyceraldehyde 3-phosphate + pyruvate + H(+) = 1-deoxy-D-xylulose 5-phosphate + CO2. Its pathway is metabolic intermediate biosynthesis; 1-deoxy-D-xylulose 5-phosphate biosynthesis; 1-deoxy-D-xylulose 5-phosphate from D-glyceraldehyde 3-phosphate and pyruvate: step 1/1. Catalyzes the acyloin condensation reaction between C atoms 2 and 3 of pyruvate and glyceraldehyde 3-phosphate to yield 1-deoxy-D-xylulose-5-phosphate (DXP). The polypeptide is 1-deoxy-D-xylulose-5-phosphate synthase (Francisella tularensis subsp. holarctica (strain FTNF002-00 / FTA)).